Reading from the N-terminus, the 228-residue chain is Transcription termination/antitermination protein NusG (228 aa).

Belongs to the NusG family.

Its function is as follows. Participates in transcription elongation, termination and antitermination. This Mycobacterium leprae (strain TN) protein is Transcription termination/antitermination protein NusG.